The chain runs to 296 residues: Putative gluconeogenesis factor (296 aa).

The protein belongs to the gluconeogenesis factor family.

The protein localises to the cytoplasm. Its function is as follows. Required for morphogenesis under gluconeogenic growth conditions. This chain is Putative gluconeogenesis factor, found in Vibrio cholerae serotype O1 (strain ATCC 39315 / El Tor Inaba N16961).